An 826-amino-acid polypeptide reads, in one-letter code: Protein lozenge (826 aa).

Disordered regions lie at residues 1–45, 87–171, and 214–263; these read MHLH…ASQT, PVSV…WSSS, and ASVG…NNNN. Residues 12–24 are compositionally biased toward pro residues; the sequence is PPSPSPNPTPTPS. Over residues 106–141 the composition is skewed to basic residues; the sequence is SHHHHHLHHHYSPYHHAHPYHPPHPHAPHHHHHHHP. A compositionally biased stretch (pro residues) spans 142-153; sequence PYPYPPAGPHPP. Over residues 156–171 the composition is skewed to polar residues; that stretch reads VTSSSTSPTGNGWSSS. Residues 275–403 form the Runt domain; the sequence is LVQKRQQEHP…TVDGPREPRS (129 aa). Residues 774 to 798 are compositionally biased toward low complexity; the sequence is QQQQQQQQQQQQVHHPQQQQVESAG. The interval 774–826 is disordered; the sequence is QQQQQQQQQQQQVHHPQQQQVESAGEVGGSGAGGVESAREEDVGDLSQVWRPY.

In terms of tissue distribution, expressed in the pupal eye during programmed cell death.

The protein localises to the nucleus. Involved in prepatterning photoreceptor precursors in the developing eye; in the larval eye disk it defines a subset of cells as an equipotential group that is competent to respond to the sevenless developmental signal and another subset that confer proper photoreceptor identity by positively regulating the homeo box gene Bar. Involved in the aop/pnt dynamic in a Ras-dependent manner to regulate pros expression. Promotes apoptosis in the pupal eye by directly activating aos and klu. Also modulates hid- and rpr-mediated cell death. Regulates amos function in olfactory sensilla development. This is Protein lozenge (lz) from Drosophila melanogaster (Fruit fly).